Consider the following 517-residue polypeptide: MTCGFSRADRSPYHGPVTSTVARDVSGVRTYQVRTYGCQMNVHDSERLAGLLEAAGYRRAAEGAEVADVVVFNTCAVRENADNKLYGNLSHLAPRKRGNPEMQIAVGGCLAQKDREAVLRRAPWVDVVFGTHNIGSLPTLLERARHNKAAQVEIAEALQQFPSSLPSARESAYAAWVSISVGCNNSCTFCIVPSLRGKEVDRSPDDILAEVRSLVADGVLEVTLLGQNVNAYGVSFADPALPRDRGAFARLLRACGEIDGLERVRFTSPHPAEFTDDVIEAMAQTPNVCPALHMPLQSGSDRVLRAMRRSYRAERFLGIIDRVRAAMPHAAITTDLIVGFPGETEEDFAATLDVVRRARFAAAFTFQYSKRPGTPAAELDGQIPKAVVQERYERLVELQESISLQGNQALVGQTVELLVATGEGRKDSATARMSGRARDGRLVHFAADDRVRPGDLVTTVITGAAPHHLIADAGVLSHRRTRAGDAHAAGRRPRGVGLGMPAVGPPAGPAQPVGCAS.

The 118-residue stretch at 29-146 (RTYQVRTYGC…LPTLLERARH (118 aa)) folds into the MTTase N-terminal domain. Cys-38, Cys-75, Cys-109, Cys-183, Cys-187, and Cys-190 together coordinate [4Fe-4S] cluster. Positions 169–405 (RESAYAAWVS…VELQESISLQ (237 aa)) constitute a Radical SAM core domain. The TRAM domain occupies 408–475 (QALVGQTVEL…PHHLIADAGV (68 aa)).

It belongs to the methylthiotransferase family. MiaB subfamily. In terms of assembly, monomer. It depends on [4Fe-4S] cluster as a cofactor.

It localises to the cytoplasm. It catalyses the reaction N(6)-dimethylallyladenosine(37) in tRNA + (sulfur carrier)-SH + AH2 + 2 S-adenosyl-L-methionine = 2-methylsulfanyl-N(6)-dimethylallyladenosine(37) in tRNA + (sulfur carrier)-H + 5'-deoxyadenosine + L-methionine + A + S-adenosyl-L-homocysteine + 2 H(+). In terms of biological role, catalyzes the methylthiolation of N6-(dimethylallyl)adenosine (i(6)A), leading to the formation of 2-methylthio-N6-(dimethylallyl)adenosine (ms(2)i(6)A) at position 37 in tRNAs that read codons beginning with uridine. The polypeptide is tRNA-2-methylthio-N(6)-dimethylallyladenosine synthase (Mycolicibacterium paratuberculosis (strain ATCC BAA-968 / K-10) (Mycobacterium paratuberculosis)).